The following is a 220-amino-acid chain: Iron-sulfur cluster repair protein YtfE (220 aa).

It belongs to the RIC family. YtfE subfamily. Homodimer.

Its subcellular location is the cytoplasm. Its function is as follows. Di-iron-containing protein involved in the repair of iron-sulfur clusters damaged by oxidative and nitrosative stress conditions. This chain is Iron-sulfur cluster repair protein YtfE, found in Shigella boydii serotype 18 (strain CDC 3083-94 / BS512).